The sequence spans 203 residues: Recombination protein RecR (203 aa).

A C4-type zinc finger spans residues 58–73; sequence CDYCGNLDVVSICNIC. The Toprim domain occupies 81 to 177; sequence SIIAIVESVA…KISKLASGIP (97 aa).

This sequence belongs to the RecR family.

Its function is as follows. May play a role in DNA repair. It seems to be involved in an RecBC-independent recombinational process of DNA repair. It may act with RecF and RecO. In Orientia tsutsugamushi (strain Boryong) (Rickettsia tsutsugamushi), this protein is Recombination protein RecR.